Here is a 286-residue protein sequence, read N- to C-terminus: Pantothenate synthetase (286 aa).

30 to 37 (MGNLHAGH) serves as a coordination point for ATP. H37 (proton donor) is an active-site residue. A (R)-pantoate-binding site is contributed by Q61. Q61 provides a ligand contact to beta-alanine. 149 to 152 (GQKD) is a binding site for ATP. Residue Q155 coordinates (R)-pantoate. ATP contacts are provided by residues V178 and 186 to 189 (LSSR).

This sequence belongs to the pantothenate synthetase family. Homodimer.

The protein localises to the cytoplasm. The enzyme catalyses (R)-pantoate + beta-alanine + ATP = (R)-pantothenate + AMP + diphosphate + H(+). Its pathway is cofactor biosynthesis; (R)-pantothenate biosynthesis; (R)-pantothenate from (R)-pantoate and beta-alanine: step 1/1. Catalyzes the condensation of pantoate with beta-alanine in an ATP-dependent reaction via a pantoyl-adenylate intermediate. This is Pantothenate synthetase from Stutzerimonas stutzeri (strain A1501) (Pseudomonas stutzeri).